The sequence spans 211 residues: Pyridoxine/pyridoxamine 5'-phosphate oxidase (211 aa).

Substrate contacts are provided by residues 7–10 and lysine 65; that span reads RREY. FMN contacts are provided by residues 60 to 65, 75 to 76, arginine 81, lysine 82, and glutamine 104; these read RIVLLK and YT. The substrate site is built by tyrosine 122, arginine 126, and serine 130. FMN-binding positions include 139 to 140 and tryptophan 184; that span reads QS. 190 to 192 is a binding site for substrate; the sequence is RLH. Arginine 194 contacts FMN.

The protein belongs to the pyridoxamine 5'-phosphate oxidase family. In terms of assembly, homodimer. The cofactor is FMN.

The enzyme catalyses pyridoxamine 5'-phosphate + O2 + H2O = pyridoxal 5'-phosphate + H2O2 + NH4(+). It carries out the reaction pyridoxine 5'-phosphate + O2 = pyridoxal 5'-phosphate + H2O2. Its pathway is cofactor metabolism; pyridoxal 5'-phosphate salvage; pyridoxal 5'-phosphate from pyridoxamine 5'-phosphate: step 1/1. The protein operates within cofactor metabolism; pyridoxal 5'-phosphate salvage; pyridoxal 5'-phosphate from pyridoxine 5'-phosphate: step 1/1. In terms of biological role, catalyzes the oxidation of either pyridoxine 5'-phosphate (PNP) or pyridoxamine 5'-phosphate (PMP) into pyridoxal 5'-phosphate (PLP). This is Pyridoxine/pyridoxamine 5'-phosphate oxidase from Vibrio parahaemolyticus serotype O3:K6 (strain RIMD 2210633).